The chain runs to 441 residues: Histidine--tRNA ligase (441 aa).

The protein belongs to the class-II aminoacyl-tRNA synthetase family. In terms of assembly, homodimer.

It localises to the cytoplasm. The catalysed reaction is tRNA(His) + L-histidine + ATP = L-histidyl-tRNA(His) + AMP + diphosphate + H(+). The chain is Histidine--tRNA ligase from Koribacter versatilis (strain Ellin345).